A 220-amino-acid polypeptide reads, in one-letter code: IQ domain-containing protein F3 (220 aa).

Basic and acidic residues predominate over residues 1 to 22; the sequence is MELDQDQKVETPEAAENGKDEM. Residues 1–81 are disordered; the sequence is MELDQDQKVE…KQIQDEKTGI (81 aa). Residues 23–50 are compositionally biased toward acidic residues; it reads QLEEQTQDEDTTETETETETETEAEAEG. Residues 69–93 are a coiled coil; sequence QAEKQIQDEKTGIKEADRAIQEQTQ. The IQ domain occupies 146–175; that stretch reads AELAGVKIQAWWRGTLVRRTLLLAILSAWT.

The sequence is that of IQ domain-containing protein F3 (Iqcf3) from Rattus norvegicus (Rat).